The following is a 137-amino-acid chain: Large ribosomal subunit protein uL16 (137 aa).

This sequence belongs to the universal ribosomal protein uL16 family. In terms of assembly, part of the 50S ribosomal subunit.

Binds 23S rRNA and is also seen to make contacts with the A and possibly P site tRNAs. The chain is Large ribosomal subunit protein uL16 from Streptococcus suis (strain 98HAH33).